A 725-amino-acid polypeptide reads, in one-letter code: Threonine--tRNA ligase, cytoplasmic (725 aa).

Residues 80-142 (EPIQITLPDG…EGNAKLELLK (63 aa)) enclose the TGS domain.

Belongs to the class-II aminoacyl-tRNA synthetase family.

Its subcellular location is the cytoplasm. The catalysed reaction is tRNA(Thr) + L-threonine + ATP = L-threonyl-tRNA(Thr) + AMP + diphosphate + H(+). The protein is Threonine--tRNA ligase, cytoplasmic of Caenorhabditis elegans.